The chain runs to 131 residues: Small ribosomal subunit protein uS8 (131 aa).

It belongs to the universal ribosomal protein uS8 family. Part of the 30S ribosomal subunit. Contacts proteins S5 and S12.

Functionally, one of the primary rRNA binding proteins, it binds directly to 16S rRNA central domain where it helps coordinate assembly of the platform of the 30S subunit. In Porphyromonas gingivalis (strain ATCC 33277 / DSM 20709 / CIP 103683 / JCM 12257 / NCTC 11834 / 2561), this protein is Small ribosomal subunit protein uS8.